The primary structure comprises 1011 residues: Protein translocase subunit SecA, chloroplastic (1011 aa).

Over residues Met1–Pro17 the composition is skewed to polar residues. The segment at Met1–His22 is disordered. The N-terminal 59 residues, Met1–Val59, are a transit peptide targeting the chloroplast. Met164–Thr171 contributes to the ATP binding site. The interval Gln976 to Ser1011 is disordered.

The protein belongs to the SecA family.

It is found in the plastid. It localises to the chloroplast stroma. The protein localises to the chloroplast thylakoid membrane. The enzyme catalyses ATP + H2O + chloroplast-proteinSide 1 = ADP + phosphate + chloroplast-proteinSide 2.. Functionally, has a central role in coupling the hydrolysis of ATP to the transfer of proteins across the thylakoid membrane. Facilitates the transport of precursor proteins from the chloroplast stroma to thylakoid lumen. This is Protein translocase subunit SecA, chloroplastic from Pisum sativum (Garden pea).